A 324-amino-acid polypeptide reads, in one-letter code: HPr kinase/phosphorylase (324 aa).

Catalysis depends on residues H146 and K167. 161-168 (GDSGLGKS) provides a ligand contact to ATP. S168 is a binding site for Mg(2+). D185 (proton acceptor; for phosphorylation activity. Proton donor; for dephosphorylation activity) is an active-site residue. An important for the catalytic mechanism of both phosphorylation and dephosphorylation region spans residues 209–218 (LEVRGLGLLD). Residue E210 participates in Mg(2+) binding. Residue R250 is part of the active site. The important for the catalytic mechanism of dephosphorylation stretch occupies residues 271–276 (QVAAGR).

The protein belongs to the HPrK/P family. Homohexamer. It depends on Mg(2+) as a cofactor.

The enzyme catalyses [HPr protein]-L-serine + ATP = [HPr protein]-O-phospho-L-serine + ADP + H(+). It carries out the reaction [HPr protein]-O-phospho-L-serine + phosphate + H(+) = [HPr protein]-L-serine + diphosphate. Catalyzes the ATP- as well as the pyrophosphate-dependent phosphorylation of a specific serine residue in HPr, a phosphocarrier protein of the phosphoenolpyruvate-dependent sugar phosphotransferase system (PTS). HprK/P also catalyzes the pyrophosphate-producing, inorganic phosphate-dependent dephosphorylation (phosphorolysis) of seryl-phosphorylated HPr (P-Ser-HPr). This is HPr kinase/phosphorylase from Ralstonia pickettii (strain 12J).